Here is a 292-residue protein sequence, read N- to C-terminus: ATP synthase gamma chain (292 aa).

It belongs to the ATPase gamma chain family. F-type ATPases have 2 components, CF(1) - the catalytic core - and CF(0) - the membrane proton channel. CF(1) has five subunits: alpha(3), beta(3), gamma(1), delta(1), epsilon(1). CF(0) has three main subunits: a, b and c.

It is found in the cell inner membrane. In terms of biological role, produces ATP from ADP in the presence of a proton gradient across the membrane. The gamma chain is believed to be important in regulating ATPase activity and the flow of protons through the CF(0) complex. The sequence is that of ATP synthase gamma chain from Chlorobaculum parvum (strain DSM 263 / NCIMB 8327) (Chlorobium vibrioforme subsp. thiosulfatophilum).